A 471-amino-acid polypeptide reads, in one-letter code: Trigger factor (471 aa).

Residues 169–264 (GDVAVVDFKG…LKEIKEKELP (96 aa)) enclose the PPIase FKBP-type domain.

Belongs to the FKBP-type PPIase family. Tig subfamily.

The protein resides in the cytoplasm. It carries out the reaction [protein]-peptidylproline (omega=180) = [protein]-peptidylproline (omega=0). Functionally, involved in protein export. Acts as a chaperone by maintaining the newly synthesized protein in an open conformation. Functions as a peptidyl-prolyl cis-trans isomerase. The polypeptide is Trigger factor (Nostoc sp. (strain PCC 7120 / SAG 25.82 / UTEX 2576)).